Here is a 146-residue protein sequence, read N- to C-terminus: Ribonuclease H (146 aa).

The RNase H type-1 domain maps to 4–145; it reads ELNKVVIYTD…ADMLARSQIV (142 aa). Mg(2+) is bound by residues Asp-13, Glu-51, Asp-73, and Asp-137.

The protein belongs to the RNase H family. In terms of assembly, monomer. Requires Mg(2+) as cofactor.

Its subcellular location is the cytoplasm. It carries out the reaction Endonucleolytic cleavage to 5'-phosphomonoester.. In terms of biological role, endonuclease that specifically degrades the RNA of RNA-DNA hybrids. In Ehrlichia chaffeensis (strain ATCC CRL-10679 / Arkansas), this protein is Ribonuclease H.